We begin with the raw amino-acid sequence, 405 residues long: Probable tRNA sulfurtransferase (405 aa).

A THUMP domain is found at 60 to 165 (AEVDKRLKKV…QDAVYISNQL (106 aa)). ATP contacts are provided by residues 183 to 184 (ML), 208 to 209 (HF), R265, G287, and Q296.

This sequence belongs to the ThiI family.

Its subcellular location is the cytoplasm. The catalysed reaction is [ThiI sulfur-carrier protein]-S-sulfanyl-L-cysteine + a uridine in tRNA + 2 reduced [2Fe-2S]-[ferredoxin] + ATP + H(+) = [ThiI sulfur-carrier protein]-L-cysteine + a 4-thiouridine in tRNA + 2 oxidized [2Fe-2S]-[ferredoxin] + AMP + diphosphate. It catalyses the reaction [ThiS sulfur-carrier protein]-C-terminal Gly-Gly-AMP + S-sulfanyl-L-cysteinyl-[cysteine desulfurase] + AH2 = [ThiS sulfur-carrier protein]-C-terminal-Gly-aminoethanethioate + L-cysteinyl-[cysteine desulfurase] + A + AMP + 2 H(+). It functions in the pathway cofactor biosynthesis; thiamine diphosphate biosynthesis. Functionally, catalyzes the ATP-dependent transfer of a sulfur to tRNA to produce 4-thiouridine in position 8 of tRNAs, which functions as a near-UV photosensor. Also catalyzes the transfer of sulfur to the sulfur carrier protein ThiS, forming ThiS-thiocarboxylate. This is a step in the synthesis of thiazole, in the thiamine biosynthesis pathway. The sulfur is donated as persulfide by IscS. The protein is Probable tRNA sulfurtransferase of Lactobacillus helveticus (strain DPC 4571).